The following is a 983-amino-acid chain: Poly [ADP-ribose] polymerase 1 (983 aa).

PARP-type zinc fingers lie at residues 8–91 (WRAE…ESGA) and 114–194 (YGIE…KKAL). Zn(2+) is bound by residues C20, C23, H52, C55, C126, C129, H156, and C159. The disordered stretch occupies residues 197-246 (AKTETAEARQTNSRAGTKRKNDSVDNEKSKLAKSSFDMSTSGALQPCSKE). The segment covering 215–226 (RKNDSVDNEKSK) has biased composition (basic and acidic residues). Residues 236 to 375 (TSGALQPCSK…SVKPKRILRP (140 aa)) enclose the PADR1 zinc-binding domain. The zinc ribbon stretch occupies residues 301–345 (GPLALCPMCSGHLSFSGGLYRCHGYISEWSKCSHSTLDPDRIKGK). Positions 306, 309, 322, and 332 each coordinate Zn(2+). Residues 369–397 (PKRILRPVLSGETSQGQGSKDATDSSRSE) form a disordered region. Residues 379-388 (GETSQGQGSK) show a composition bias toward polar residues. Positions 394–484 (SRSERLADLK…RKLPFDKYKI (91 aa)) constitute a BRCT domain. The WGR domain maps to 511–611 (HCHILEDGNS…TNFQKQPGKF (101 aa)). The PARP alpha-helical domain occupies 633–751 (SSNLAPSLIE…DIEIASRIVG (119 aa)). Positions 758 to 983 (ESLDDKYKKL…LLKVRFKHKR (226 aa)) constitute a PARP catalytic domain.

It belongs to the ARTD/PARP family.

It is found in the nucleus. The enzyme catalyses NAD(+) + (ADP-D-ribosyl)n-acceptor = nicotinamide + (ADP-D-ribosyl)n+1-acceptor + H(+).. It catalyses the reaction L-aspartyl-[protein] + NAD(+) = 4-O-(ADP-D-ribosyl)-L-aspartyl-[protein] + nicotinamide. The catalysed reaction is L-glutamyl-[protein] + NAD(+) = 5-O-(ADP-D-ribosyl)-L-glutamyl-[protein] + nicotinamide. Involved in the base excision repair (BER) pathway, by catalyzing the poly(ADP-ribosyl)ation of a limited number of acceptor proteins involved in chromatin architecture and in DNA metabolism. This modification follows DNA damages and appears as an obligatory step in a detection/signaling pathway leading to the reparation of DNA strand breaks. The sequence is that of Poly [ADP-ribose] polymerase 1 (PARP1) from Arabidopsis thaliana (Mouse-ear cress).